A 1247-amino-acid polypeptide reads, in one-letter code: Nitric oxide synthase (1247 aa).

The segment at 13–33 (EVAEGRESSKANHIGEERRGY) is disordered. S146 provides a ligand contact to (6R)-L-erythro-5,6,7,8-tetrahydrobiopterin. C224 contacts heme b. L-arginine-binding residues include Q287, W396, Y397, E401, and N406. The (6R)-L-erythro-5,6,7,8-tetrahydrobiopterin site is built by W487 and F500. Y515 contacts heme b. The tract at residues 537-557 (PRRKFNFKQIARAVKFTSKLF) is calmodulin-binding. The 200-residue stretch at 567–766 (ATVLYATETG…AFRKWAPEVF (200 aa)) folds into the Flavodoxin-like domain. FMN is bound at residue 712-743 (VFALGSSAYPNFCAFGKYIDNILGELGGERLM). An FAD-binding FR-type domain is found at 795–1065 (NTVRYAPVAE…VRSAPSFHMS (271 aa)). Residues 855–866 (YEPGDHVGIFPA) and 998–1008 (LQPRFYSISSS) contribute to the FAD site. NADP(+) contacts are provided by residues 1073–1091 (ILIG…WQEW) and 1170–1185 (KGHI…AEHV).

It belongs to the NOS family. Heme b serves as cofactor. FAD is required as a cofactor. Requires FMN as cofactor.

The enzyme catalyses 2 L-arginine + 3 NADPH + 4 O2 + H(+) = 2 L-citrulline + 2 nitric oxide + 3 NADP(+) + 4 H2O. With respect to regulation, stimulated by calcium/calmodulin. In terms of biological role, produces nitric oxide (NO) which is a messenger molecule with diverse functions throughout the body. Nitric oxide limits plasmodium development in the midgut. The polypeptide is Nitric oxide synthase (Anopheles stephensi (Indo-Pakistan malaria mosquito)).